Reading from the N-terminus, the 157-residue chain is Peptide methionine sulfoxide reductase MsrB (157 aa).

The 124-residue stretch at 14 to 137 (DNDLRERLTP…NSAALRFVPL (124 aa)) folds into the MsrB domain. Cys-126 functions as the Nucleophile in the catalytic mechanism.

Belongs to the MsrB Met sulfoxide reductase family.

The enzyme catalyses L-methionyl-[protein] + [thioredoxin]-disulfide + H2O = L-methionyl-(R)-S-oxide-[protein] + [thioredoxin]-dithiol. This is Peptide methionine sulfoxide reductase MsrB from Deinococcus radiodurans (strain ATCC 13939 / DSM 20539 / JCM 16871 / CCUG 27074 / LMG 4051 / NBRC 15346 / NCIMB 9279 / VKM B-1422 / R1).